We begin with the raw amino-acid sequence, 362 residues long: Serine/threonine-protein kinase SRK2D (362 aa).

The Protein kinase domain occupies tyrosine 23 to phenylalanine 279. Residues isoleucine 29–alanine 37 and lysine 52 contribute to the ATP site. The Proton acceptor role is filled by aspartate 142.

This sequence belongs to the protein kinase superfamily. Ser/Thr protein kinase family. Interacts with ABI1. Interacts with I-2, TOPP1 and TOPP2. Interacts with FREE1 (via C-terminus). In terms of tissue distribution, expressed in seeds, seedlings, roots (especially in tips), stems, leaves, shoots, flowers and siliques.

It catalyses the reaction L-seryl-[protein] + ATP = O-phospho-L-seryl-[protein] + ADP + H(+). The catalysed reaction is L-threonyl-[protein] + ATP = O-phospho-L-threonyl-[protein] + ADP + H(+). In terms of biological role, together with SRK2I, key component and activator of the abscisic acid (ABA) signaling pathway that regulates numerous ABA responses, such as seed germination, Pro accumulation, root growth inhibition, dormancy and seedling growth, and, to a lesser extent, stomatal closure. In response to ABA, phosphorylates the ESCRT-I complex component FREE1, which is required for ABA-induced FREE1 nuclear import. This chain is Serine/threonine-protein kinase SRK2D (SRK2D), found in Arabidopsis thaliana (Mouse-ear cress).